Here is a 207-residue protein sequence, read N- to C-terminus: Small ribosomal subunit protein uS3c (207 aa).

In terms of domain architecture, KH type-2 spans 39-109 (IRDYIFTNLL…QLKINIIDVT (71 aa)).

Belongs to the universal ribosomal protein uS3 family. In terms of assembly, part of the 30S ribosomal subunit.

It is found in the plastid. The protein localises to the chloroplast. This Cyanidium caldarium (Red alga) protein is Small ribosomal subunit protein uS3c (rps3).